The chain runs to 181 residues: UPF0398 protein lin2003 (181 aa).

The protein belongs to the UPF0398 family.

This Listeria innocua serovar 6a (strain ATCC BAA-680 / CLIP 11262) protein is UPF0398 protein lin2003.